The sequence spans 198 residues: Recombination protein RecR (198 aa).

A C4-type zinc finger spans residues 57–72 (CSVCCNLTDQDPCQIC). In terms of domain architecture, Toprim spans 80–175 (STICVVQEPR…KVTRIARGLP (96 aa)).

It belongs to the RecR family.

Its function is as follows. May play a role in DNA repair. It seems to be involved in an RecBC-independent recombinational process of DNA repair. It may act with RecF and RecO. The polypeptide is Recombination protein RecR (Symbiobacterium thermophilum (strain DSM 24528 / JCM 14929 / IAM 14863 / T)).